Consider the following 2120-residue polypeptide: MRSFKRVNFGTLLSSQKEAEELLPALKEFLSNPPAGFPSSRSDAERRQACDAILRACNQQLTAKLACPRHLGSLLELAELACDGYLVSTPQRPPLYLERILFVLLRNAAAQGSPEATLRLAQPLHACLVQCSREAAPQDYEAVARGSFSLLWKGAEALLERRAAFAARLKALSFLVLLEDESTPCEVPHFASPTACRAVAAHQLFDASGHGLNEADADFLDDLLSRHVIRALVGERGSSSGLLSPQRALCLLELTLEHCRRFCWSRHHDKAISAVEKAHSYLRNTNLAPSLQLCQLGVKLLQVGEEGPQAVAKLLIKASAVLSKSMEAPSPPLRALYESCQFFLSGLERGTKRRYRLDAILSLFAFLGGYCSLLQQLRDDGVYGGSSKQQQSFLQMYFQGLHLYTVVVYDFAQGCQIVDLADLTQLVDSCKSTVVWMLEALEGLSGQELTDHMGMTASYTSNLAYSFYSHKLYAEACAISEPLCQHLGLVKPGTYPEVPPEKLHRCFRLQVESLKKLGKQAQGCKMVILWLAALQPCSPEHMAEPVTFWVRVKMDAARAGDKELQLKTLRDSLSGWDPETLALLLREELQAYKAVRADTGQERFNIICDLLELSPEETPAGAWARATHLVELAQVLCYHDFTQQTNCSALDAIREALQLLDSVRPEAQARDQLLDDKAQALLWLYICTLEAKMQEGIERDRRAQAPGNLEEFEVNDLNYEDKLQEDRFLYSNIAFNLAADAAQSKCLDQALALWKELLTKGQAPAVRCLQQTAASLQILAALYQLVAKPMQALEVLLLLRIVSERLKDHSKAAGSSCHITQLLLTLGCPSYAQLHLEEAASSLKHLDQTTDTYLLLSLTCDLLRSQLYWTHQKVTKGVSLLLSVLRDPALQKSSKAWYLLRVQVLQLVAAYLSLPSNNLSHSLWEQLCAQGWQTPEIALIDSHKLLRSIILLLMGSDILSTQKAAVETSFLDYGENLVQKWQVLSEVLSCSEKLVCHLGRLGSVSEAKAFCLEALKLTTKLQIPRQCALFLVLKGELELARNDIDLCQSDLQQVLFLLESCTEFGGVTQHLDSVKKVHLQKGKQQAQVPCPPQLPEEELFLRGPALELVATVAKEPGPIAPSTNSSPVLKTKPQPIPNFLSHSPTCDCSLCASPVLTAVCLRWVLVTAGVRLAMGHQAQGLDLLQVVLKGCPEAAERLTQALQASLNHKTPPSLVPSLLDEILAQAYTLLALEGLNQPSNESLQKVLQSGLKFVAARIPHLEPWRASLLLIWALTKLGGLSCCTTQLFASSWGWQPPLIKSVPGSEPSKTQGQKRSGRGRQKLASAPLRLNNTSQKGLEGRGLPCTPKPPDRIRQAGPHVPFTVFEEVCPTESKPEVPQAPRVQQRVQTRLKVNFSDDSDLEDPVSAEAWLAEEPKRRGTASRGRGRARKGLSLKTDAVVAPGSAPGNPGLNGRSRRAKKVASRHCEERRPQRASDQARPGPEIMRTIPEEELTDNWRKMSFEILRGSDGEDSASGGKTPAPGPEAASGEWELLRLDSSKKKLPSPCPDKESDKDLGPRLRLPSAPVATGLSTLDSICDSLSVAFRGISHCPPSGLYAHLCRFLALCLGHRDPYATAFLVTESVSITCRHQLLTHLHRQLSKAQKHRGSLEIADQLQGLSLQEMPGDVPLARIQRLFSFRALESGHFPQPEKESFQERLALIPSGVTVCVLALATLQPGTVGNTLLLTRLEKDSPPVSVQIPTGQNKLHLRSVLNEFDAIQKAQKENSSCTDKREWWTGRLALDHRMEVLIASLEKSVLGCWKGLLLPSSEEPGPAQEASRLQELLQDCGWKYPDRTLLKIMLSGAGALTPQDIQALAYGLCPTQPERAQELLNEAVGRLQGLTVPSNSHLVLVLDKDLQKLPWESMPSLQALPVTRLPSFRFLLSYSIIKEYGASPVLSQGVDPRSTFYVLNPHNNLSSTEEQFRANFSSEAGWRGVVGEVPRPEQVQEALTKHDLYIYAGHGAGARFLDGQAVLRLSCRAVALLFGCSSAALAVRGNLEGAGIVLKYIMAGCPLFLGNLWDVTDRDIDRYTEALLQGWLGAGPGAPLLYYVNQARQAPRLKYLIGAAPIAYGLPVSLR.

Phosphoserine is present on Ser1126. Positions 1299 to 1355 (IKSVPGSEPSKTQGQKRSGRGRQKLASAPLRLNNTSQKGLEGRGLPCTPKPPDRIRQ) are disordered. Ser1396 and Ser1399 each carry phosphoserine. 2 disordered regions span residues 1412–1485 (AEEP…PEIM) and 1507–1561 (GSDG…PRLR). 2 stretches are compositionally biased toward basic residues: residues 1418-1432 (RGTA…RKGL) and 1454-1463 (RSRRAKKVAS). The segment covering 1464–1473 (RHCEERRPQR) has biased composition (basic and acidic residues). Ser1508 carries the phosphoserine modification. Basic and acidic residues predominate over residues 1548–1558 (PDKESDKDLGP). Residues 1945–2040 (PRSTFYVLNP…SAALAVRGNL (96 aa)) enclose the Peptidase C50 domain. Cys2029 is a catalytic residue.

In terms of assembly, interacts with PTTG1. Interacts with RAD21. Autocleaves. This function, which is not essential for its protease activity, is unknown. Post-translationally, phosphorylated by CDK1. There are 8 Ser/Thr phosphorylation sites. Among them, Ser-1126 phosphorylation is the major site, which conducts to the enzyme inactivation.

The protein resides in the cytoplasm. It localises to the nucleus. The enzyme catalyses All bonds known to be hydrolyzed by this endopeptidase have arginine in P1 and an acidic residue in P4. P6 is often occupied by an acidic residue or by a hydroxy-amino-acid residue, the phosphorylation of which enhances cleavage.. With respect to regulation, regulated by at least two independent mechanisms. First, it is inactivated via its interaction with securin/PTTG1, which probably covers its active site. The association with PTTG1 is not only inhibitory, since PTTG1 is also required for activating it, the enzyme being inactive in cells in which PTTG1 is absent. PTTG1 degradation at anaphase, liberates it and triggers RAD21 cleavage. Second, phosphorylation at Ser-1126 inactivates it. The complete phosphorylation during mitosis, is removed when cells undergo anaphase. Activation of the enzyme at the metaphase-anaphase transition probably requires the removal of both securin and inhibitory phosphate. Caspase-like protease, which plays a central role in the chromosome segregation by cleaving the SCC1/RAD21 subunit of the cohesin complex at the onset of anaphase. During most of the cell cycle, it is inactivated by different mechanisms. The chain is Separin (ESPL1) from Homo sapiens (Human).